The following is a 265-amino-acid chain: Putative N(omega)-hydroxy-L-arginine synthase DcsA (265 aa).

The protein belongs to the DcsA family. Heme serves as cofactor.

Involved in the biosynthesis of the antibiotic D-cycloserine (DCS), a cyclic structural analog of D-alanine, used as an antitubercular agent. Could catalyze the production of N(omega)-hydroxy-L-arginine (NHA) from L-arginine. The chain is Putative N(omega)-hydroxy-L-arginine synthase DcsA from Streptomyces lavendulae.